The following is a 117-amino-acid chain: Protein Ocr (117 aa).

Homodimer. Interacts with HsdM (AC P08957), the M subunit of host type I methyltransferase restriction enzyme M.EcoKI; 1 Ocr dimer binds to M.EcoKI. Interacts with HsdR (AC P08956), the R subunit of host type I bifunctional endonuclease and methyltransferase restriction enzyme R.EcoKI; 2 Ocr dimers binds to R.EcoKI. Interacts with host PglX/BrxX (AC P0DUF9); this interaction inhibits the enzymatic activity of PglX/BrxX through high-affinity binding. Forms a 2:2 tetrameric complex with phage T7 OCR.

In terms of biological role, prevents both degradation and modification of T7 DNA by the host restriction-modification complex. Structural mimic of the phosphate backbone of B-form DNA that binds to and completely occupies the DNA-binding sites of all known families of the complex type I DNA restriction enzymes. Thereby, inhibits the restriction endonuclease activity and protects the phage genome as it penetrates into host cytoplasm. Inhibits host transcription by binding to the bacterial RNAP and competing with sigma factors. Inhibits the host exclusion defense system BREX. The protein is Protein Ocr of Escherichia phage T7 (Bacteriophage T7).